The following is a 692-amino-acid chain: Elongation factor G (692 aa).

The tr-type G domain occupies lysine 8–leucine 282. GTP is bound by residues alanine 17–threonine 24, aspartate 81–histidine 85, and asparagine 135–aspartate 138.

It belongs to the TRAFAC class translation factor GTPase superfamily. Classic translation factor GTPase family. EF-G/EF-2 subfamily.

It is found in the cytoplasm. Its function is as follows. Catalyzes the GTP-dependent ribosomal translocation step during translation elongation. During this step, the ribosome changes from the pre-translocational (PRE) to the post-translocational (POST) state as the newly formed A-site-bound peptidyl-tRNA and P-site-bound deacylated tRNA move to the P and E sites, respectively. Catalyzes the coordinated movement of the two tRNA molecules, the mRNA and conformational changes in the ribosome. In Mycoplasmopsis pulmonis (strain UAB CTIP) (Mycoplasma pulmonis), this protein is Elongation factor G (fusA).